The primary structure comprises 432 residues: Calcium uptake protein 2, mitochondrial (432 aa).

The transit peptide at 1–22 directs the protein to the mitochondrion; the sequence is MAAAAGRSAWLAAWGGRLRRGL. One can recognise an EF-hand 1 domain in the interval 169–204; sequence KPHSGFHVAFKMLDVDGNEMIERKEFVKLQKIISKQ. The Ca(2+) site is built by D182, D184, N186, M188, E190, and E193. S202 carries the post-translational modification Phosphoserine. The EF-hand 2; degenerate domain occupies 224–259; it reads EPGVNTTLQVRFFGKRGEKKLHYKEFRRFMENLQTE. Residues 290-325 form the EF-hand 3; degenerate domain; that stretch reads TENKDIYWRNVREKLSVGESISLDEFKSFCHFTTHL. An EF-hand 4 domain is found at 359 to 394; the sequence is LSDNLLDTVFKIFDLDGDECLSHGEFLGVLKNRMHR. Residues D372, D374, D376, C378, and E383 each contribute to the Ca(2+) site.

It belongs to the MICU1 family. MICU2 subfamily. In terms of assembly, heterodimer; disulfide-linked; heterodimerizes with MICU1. Component of the uniplex complex, composed of MCU, EMRE/SMDT1, MICU1 and MICU2 in a 4:4:1:1 stoichiometry. Predominantly expressed in stomach, intestine, skeletal muscle, kidney, heart, testis, prostate and uterus.

It is found in the mitochondrion intermembrane space. It localises to the mitochondrion inner membrane. In terms of biological role, calcium sensor of the mitochondrial calcium uniporter (MCU) channel, which senses calcium level via its EF-hand domains. MICU1 and MICU2 form a disulfide-linked heterodimer that stimulates and inhibits MCU activity, depending on the concentration of calcium. At low calcium levels, MICU1 occludes the pore of the MCU channel, preventing mitochondrial calcium uptake. At higher calcium levels, calcium-binding to MICU1 and MICU2 induces a conformational change that weakens MCU-MICU1 interactions and moves the MICU1-MICU2 heterodimer away from the pore, allowing calcium permeation through the MCU channel. The sequence is that of Calcium uptake protein 2, mitochondrial from Mus musculus (Mouse).